The chain runs to 430 residues: Gamma-glutamyl phosphate reductase (430 aa).

This sequence belongs to the gamma-glutamyl phosphate reductase family.

It localises to the cytoplasm. It carries out the reaction L-glutamate 5-semialdehyde + phosphate + NADP(+) = L-glutamyl 5-phosphate + NADPH + H(+). It participates in amino-acid biosynthesis; L-proline biosynthesis; L-glutamate 5-semialdehyde from L-glutamate: step 2/2. Catalyzes the NADPH-dependent reduction of L-glutamate 5-phosphate into L-glutamate 5-semialdehyde and phosphate. The product spontaneously undergoes cyclization to form 1-pyrroline-5-carboxylate. The sequence is that of Gamma-glutamyl phosphate reductase from Corynebacterium diphtheriae (strain ATCC 700971 / NCTC 13129 / Biotype gravis).